The sequence spans 90 residues: Small ribosomal subunit protein bS16 (90 aa).

It belongs to the bacterial ribosomal protein bS16 family.

The polypeptide is Small ribosomal subunit protein bS16 (Bacillus licheniformis (strain ATCC 14580 / DSM 13 / JCM 2505 / CCUG 7422 / NBRC 12200 / NCIMB 9375 / NCTC 10341 / NRRL NRS-1264 / Gibson 46)).